The sequence spans 297 residues: Protein PecM (297 aa).

10 consecutive transmembrane segments (helical) span residues 6 to 26 (FAFYAPCVWGTTYFVTTQFLP), 38 to 58 (ALPAGIILILGKNLPPVGWLW), 60 to 80 (LFVLGALNIGVFFVMLFFAAY), 86 to 106 (VVALVGSLQPLIVILLSFLLL), 116 to 136 (VAAVAGGIGIVLLISLPKAPL), 138 to 158 (PAGLVASALATMSMASGLVLT), 167 to 187 (MTMLTFTGWQLFCGGLVILPV), 203 to 223 (LAGYLYLAIPGSLLAYFMWFS), 231 to 251 (VIMSLLGFLSPLVALLLGFLF), and 261 to 281 (LVGVVFIFSALIIVQDISLFS). EamA domains are found at residues 12–130 (CVWG…LLIS) and 149–276 (MSMA…IVQD).

It belongs to the EamA transporter family.

It is found in the cell membrane. Its function is as follows. Involved in pectinase, cellulase, and blue pigment regulation. This is Protein PecM (pecM) from Dickeya dadantii (strain 3937) (Erwinia chrysanthemi (strain 3937)).